The chain runs to 284 residues: Bifunctional protein FolD 1 (284 aa).

Residues 166-168 (GAS) and Ile-232 contribute to the NADP(+) site.

This sequence belongs to the tetrahydrofolate dehydrogenase/cyclohydrolase family. Homodimer.

The enzyme catalyses (6R)-5,10-methylene-5,6,7,8-tetrahydrofolate + NADP(+) = (6R)-5,10-methenyltetrahydrofolate + NADPH. It catalyses the reaction (6R)-5,10-methenyltetrahydrofolate + H2O = (6R)-10-formyltetrahydrofolate + H(+). It functions in the pathway one-carbon metabolism; tetrahydrofolate interconversion. Functionally, catalyzes the oxidation of 5,10-methylenetetrahydrofolate to 5,10-methenyltetrahydrofolate and then the hydrolysis of 5,10-methenyltetrahydrofolate to 10-formyltetrahydrofolate. This Pseudomonas syringae pv. tomato (strain ATCC BAA-871 / DC3000) protein is Bifunctional protein FolD 1.